A 157-amino-acid chain; its full sequence is Small ribosomal subunit protein uS7 (157 aa).

Belongs to the universal ribosomal protein uS7 family. Part of the 30S ribosomal subunit. Contacts proteins S9 and S11.

One of the primary rRNA binding proteins, it binds directly to 16S rRNA where it nucleates assembly of the head domain of the 30S subunit. Is located at the subunit interface close to the decoding center, probably blocks exit of the E-site tRNA. The chain is Small ribosomal subunit protein uS7 from Bdellovibrio bacteriovorus (strain ATCC 15356 / DSM 50701 / NCIMB 9529 / HD100).